We begin with the raw amino-acid sequence, 364 residues long: uncharacterized protein (364 aa).

3 consecutive transmembrane segments (helical) span residues 41–61, 298–318, and 329–349; these read NIFT…FFGL, VIYI…ITYM, and LLFY…SIII.

The protein localises to the membrane. This is an uncharacterized protein from Mycoplasma capricolum subsp. capricolum (strain California kid / ATCC 27343 / NCTC 10154).